A 527-amino-acid polypeptide reads, in one-letter code: Abrin-b (527 aa).

Glutamine 1 carries the pyrrolidone carboxylic acid modification. The N-linked (GlcNAc...) asparagine glycan is linked to asparagine 110. The active site involves glutamate 163. 3 cysteine pairs are disulfide-bonded: cysteine 246–cysteine 268, cysteine 285–cysteine 304, and cysteine 328–cysteine 345. One can recognise a Ricin B-type lectin 1 domain in the interval 272–399 (YEPTVRIGGR…YLMRQGWRTG (128 aa)). Residues 282 to 324 (NGMCVDVYDDGYHNGNRIIAWKCKDRLEENQLWTLKSDKTIRS) form a 1-alpha repeat. A 1-beta repeat occupies 325–365 (NGKCLTTEGYAPGNYVMIYDCTSAVAEATYWEIWDNGTIIN). N-linked (GlcNAc...) asparagine glycosylation is found at asparagine 360 and asparagine 400. One copy of the 1-gamma repeat lies at 368–400 (SALVLSAESSSMGGTLTVQTNEYLMRQGWRTGN). Residues 402–526 (TSPFVTSISG…GKPNQIWLTL (125 aa)) enclose the Ricin B-type lectin 2 domain. Residues 413–448 (SDLCMQAQGSNVWLAYCDNNKKEQQWALYTDGSIRS) form a 2-alpha repeat. Cystine bridges form between cysteine 416-cysteine 429 and cysteine 455-cysteine 472. The stretch at 452-491 (TNNCLTSKDHKQGSPIVLMACSNGWASQRWLFRNDGSIYN) is one 2-beta repeat. The stretch at 494 to 527 (DDMVMDVKRSDPSLKEIILHPYHGKPNQIWLTLF) is one 2-gamma repeat.

This sequence in the N-terminal section; belongs to the ribosome-inactivating protein family. Type 2 RIP subfamily. As to quaternary structure, disulfide-linked dimer of A and B chains.

It catalyses the reaction Endohydrolysis of the N-glycosidic bond at one specific adenosine on the 28S rRNA.. Its function is as follows. The A chain is responsible for inhibiting protein synthesis through the catalytic inactivation of 60S ribosomal subunits by removing adenine from position 4,324 of 28S rRNA. Abrin-a is more toxic than ricin. The B chain is a galactose-specific lectin that facilitates the binding of abrin to the cell membrane that precedes endocytosis. The polypeptide is Abrin-b (Abrus precatorius (Indian licorice)).